The primary structure comprises 862 residues: Taxadiene synthase (862 aa).

Asp613, Asp617, Asn757, Thr761, and Glu765 together coordinate Mg(2+). A DDXXD motif motif is present at residues 613–617 (DDMAD).

The protein belongs to the terpene synthase family. Mg(2+) serves as cofactor.

It catalyses the reaction (2E,6E,10E)-geranylgeranyl diphosphate = taxa-4(5),11(12)-diene + diphosphate. The protein operates within alkaloid biosynthesis; taxol biosynthesis; taxa-4(20),11-dien-5alpha-ol from geranylgeranyl diphosphate: step 1/2. Its function is as follows. Catalyzes the cyclization of the ubiquitous isoprenoid intermediate geranylgeranyl diphosphate to taxa-4,11-diene, the parent olefin with a taxane skeleton. This is Taxadiene synthase (TDC1) from Taxus baccata (English yew).